The sequence spans 322 residues: Mas-related G-protein coupled receptor member X4 (322 aa).

The Extracellular segment spans residues Met-1–Thr-31. Asn-25 is a glycosylation site (N-linked (GlcNAc...) asparagine). A helical transmembrane segment spans residues Val-32–Leu-52. Residues Gly-53–Ala-60 lie on the Cytoplasmic side of the membrane. The chain crosses the membrane as a helical span at residues Val-61–Ile-81. Topologically, residues Arg-82–Lys-96 are extracellular. Asn-89 carries N-linked (GlcNAc...) asparagine glycosylation. A helical membrane pass occupies residues Ile-97 to Ser-117. Topologically, residues Thr-118–His-137 are cytoplasmic. Residues Leu-138–Trp-158 traverse the membrane as a helical segment. Residues Arg-159 to Asp-177 lie on the Extracellular side of the membrane. Residues Phe-178–Leu-198 traverse the membrane as a helical segment. Residues Leu-199–Ile-218 lie on the Cytoplasmic side of the membrane. Residues Leu-219–Ile-239 form a helical membrane-spanning segment. The Extracellular segment spans residues Tyr-240 to Tyr-254. A helical membrane pass occupies residues Leu-255–Val-275. Residues Gly-276–Pro-322 are Cytoplasmic-facing. The interval Pro-299 to Pro-322 is disordered.

The protein belongs to the G-protein coupled receptor 1 family. Mas subfamily. As to expression, uniquely localized in a subset of small dorsal root and trigeminal sensory neurons.

Its subcellular location is the cell membrane. In terms of biological role, orphan receptor. Probably involved in the function of nociceptive neurons. May regulate nociceptor function and/or development, including the sensation or modulation of pain. Potently activated by enkephalins. The polypeptide is Mas-related G-protein coupled receptor member X4 (MRGPRX4) (Homo sapiens (Human)).